The following is a 142-amino-acid chain: Large ribosomal subunit protein uL11 (142 aa).

It belongs to the universal ribosomal protein uL11 family. As to quaternary structure, part of the ribosomal stalk of the 50S ribosomal subunit. Interacts with L10 and the large rRNA to form the base of the stalk. L10 forms an elongated spine to which L12 dimers bind in a sequential fashion forming a multimeric L10(L12)X complex. Post-translationally, one or more lysine residues are methylated.

Functionally, forms part of the ribosomal stalk which helps the ribosome interact with GTP-bound translation factors. The chain is Large ribosomal subunit protein uL11 from Akkermansia muciniphila (strain ATCC BAA-835 / DSM 22959 / JCM 33894 / BCRC 81048 / CCUG 64013 / CIP 107961 / Muc).